A 334-amino-acid polypeptide reads, in one-letter code: Phospho-N-acetylmuramoyl-pentapeptide-transferase (334 aa).

Helical transmembrane passes span 2-22 (IPVL…GPVV), 55-75 (VIFL…PGGV), 78-98 (GWIE…LGFM), 116-136 (EKLL…VFVL), 154-174 (GLAL…VVLA), 187-207 (GLAA…ALVM), 211-231 (WVGI…CYNF), 236-256 (VFMG…AAVI), 262-282 (FLLI…IQVI), and 311-331 (VVLT…AGLK).

It belongs to the glycosyltransferase 4 family. MraY subfamily. It depends on Mg(2+) as a cofactor.

The protein localises to the cell membrane. The catalysed reaction is UDP-N-acetyl-alpha-D-muramoyl-L-alanyl-gamma-D-glutamyl-meso-2,6-diaminopimeloyl-D-alanyl-D-alanine + di-trans,octa-cis-undecaprenyl phosphate = di-trans,octa-cis-undecaprenyl diphospho-N-acetyl-alpha-D-muramoyl-L-alanyl-D-glutamyl-meso-2,6-diaminopimeloyl-D-alanyl-D-alanine + UMP. Its pathway is cell wall biogenesis; peptidoglycan biosynthesis. Catalyzes the initial step of the lipid cycle reactions in the biosynthesis of the cell wall peptidoglycan: transfers peptidoglycan precursor phospho-MurNAc-pentapeptide from UDP-MurNAc-pentapeptide onto the lipid carrier undecaprenyl phosphate, yielding undecaprenyl-pyrophosphoryl-MurNAc-pentapeptide, known as lipid I. The sequence is that of Phospho-N-acetylmuramoyl-pentapeptide-transferase from Desulforudis audaxviator (strain MP104C).